A 1341-amino-acid chain; its full sequence is Restriction of telomere capping protein 1 (1341 aa).

A disordered region spans residues 1-39 (MSLSPHVENASIPKGSTPIPKNRNVSSIGKGEFLGSSSS). WD repeat units lie at residues 207-248 (NKFS…SIDN), 256-296 (EHTR…SKSS), 305-342 (TASD…YKFA), 367-406 (AHTG…NAAE), 439-486 (NTGY…IPKH), and 489-527 (LSET…TVLE). Disordered stretches follow at residues 559–593 (PELQ…IGGI), 600–619 (TGLT…GPTF), 630–651 (ASSF…ENRE), 736–765 (KNAT…DDDD), and 789–830 (NEKV…DRAR). The span at 630-644 (ASSFNSSSASLTSLT) shows a compositional bias: low complexity. The span at 753–765 (DDGDDDDDDDDDD) shows a compositional bias: acidic residues. Residues 814–823 (SSISSISASR) show a composition bias toward low complexity. Residues 843 to 883 (KIQTLVDLISIATHNASVYLSIDDLTNFKIWILIRDSLLWD) form a WD 7 repeat. Disordered regions lie at residues 941–962 (AFRA…KLKE) and 1013–1043 (DEHE…KSIP). Basic and acidic residues-rich tracts occupy residues 951-962 (DAEKKPVSKLKE) and 1015-1027 (HEHQ…HDSP). A phosphoserine mark is found at serine 1036, serine 1080, serine 1087, serine 1089, serine 1123, and serine 1133. WD repeat units lie at residues 1129-1169 (SRPD…KQLY) and 1216-1255 (LFGI…LITN). The RING-type; degenerate zinc-finger motif lies at 1293 to 1335 (CVLCERPLKKLTMVILPCGHEGHFQCIQEWFLDENEQECPGGC).

It belongs to the WD repeat RTC1 family. As to quaternary structure, component of the SEA complex composed of at least IML1/SEA1, RTC1/SEA2, MTC5/SEA3, NPR2, NPR3, SEA4, SEC13 and SEH1. Interacts with ribosomes.

It is found in the vacuole membrane. In terms of biological role, component of the SEA complex which coats the vacuolar membrane and is involved in intracellular trafficking, autophagy, response to nitrogen starvation, and amino acid biogenesis. May be involved in a process influencing telomere capping. The chain is Restriction of telomere capping protein 1 (RTC1) from Saccharomyces cerevisiae (strain ATCC 204508 / S288c) (Baker's yeast).